The sequence spans 330 residues: Cathepsin K (330 aa).

The N-terminal stretch at 1–16 (MWGLKVVLLLPVMSSA) is a signal peptide. The propeptide at 17 to 115 (LYPEEILDTQ…TLYIPDWEGR (99 aa)) is activation peptide. Asn104 is a glycosylation site (N-linked (GlcNAc...) asparagine). 3 disulfide bridges follow: Cys137–Cys178, Cys171–Cys211, and Cys270–Cys319. Cys140 is a catalytic residue. Active-site residues include His277 and Asn297.

This sequence belongs to the peptidase C1 family. In terms of tissue distribution, expressed in the thyroid epithelial cells.

The protein resides in the lysosome. It localises to the secreted. It is found in the apical cell membrane. The catalysed reaction is Broad proteolytic activity. With small-molecule substrates and inhibitors, the major determinant of specificity is P2, which is preferably Leu, Met &gt; Phe, and not Arg.. Its function is as follows. Thiol protease involved in osteoclastic bone resorption and may participate partially in the disorder of bone remodeling. Displays potent endoprotease activity against fibrinogen at acid pH. May play an important role in extracellular matrix degradation. Involved in the release of thyroid hormone thyroxine (T4) by limited proteolysis of TG/thyroglobulin in the thyroid follicle lumen. The protein is Cathepsin K (CTSK) of Sus scrofa (Pig).